The chain runs to 521 residues: MLSFRNQPGNPSGNLTFGGVSNRAREPRALEIRLDQDFAEGERGVHFVATPDPNVDRRGTLCSADVQYILKNVLSHYNSSNDTISVSKRAKSLRIIQELKLRYGLTDEMLQKLSSLLLSSPLMSDTMDGRRKVTDIISTCASLNSKSTLSDIRGKFFNDYVRYGGNLTHVNVNTRSSASVQDDIPIVLTVMNLPGKTSQAYVVGDDTVNLKLICRKSTSVYNMNPDDEEMRTFENKTETRVISTQLSEGSAEYKYFLTFIQEARLAAHNENLTMYELTKSFNINAPLDANGLKEVKKETRDQVMYLEFGSSIEANLIFQTRAVKPNARSHHKRIAAAFQPMCAFIAWMIESDEVSRGSPDQQKLYYGAFGGDAPLGFQRELRNLMRSLYWTEGIKYDAENDLYPKCWTMADHGPPDSNNYNFEIEHRKIILAMYVLEHLREHGRMPHRFAQKFSTGVSRTPPVIGAVARALRKVCVDDTLWCEHVLRTTRKNDPQRTKVTILDAAAQIFLQNVSRNAPKPR.

Positions 1 to 15 (MLSFRNQPGNPSGNL) are enriched in polar residues. Residues 1–20 (MLSFRNQPGNPSGNLTFGGV) form a disordered region.

This is an uncharacterized protein from Micromonas pusilla (Picoplanktonic green alga).